The primary structure comprises 574 residues: Adenine deaminase (574 aa).

The protein belongs to the metallo-dependent hydrolases superfamily. Adenine deaminase family. It depends on Mn(2+) as a cofactor.

The catalysed reaction is adenine + H2O + H(+) = hypoxanthine + NH4(+). This Thermosipho africanus (strain TCF52B) protein is Adenine deaminase.